Here is a 603-residue protein sequence, read N- to C-terminus: Mono(2-hydroxyethyl) terephthalate hydrolase (603 aa).

Positions 1 to 17 are cleaved as a signal peptide; sequence MQTTVTTMLLASVALAA. A lipid anchor (N-palmitoyl cysteine) is attached at C18. C18 carries S-diacylglycerol cysteine lipidation. Positions 24–44 are disordered; it reads TPLPLPQQQPPQQEPPPPPVP. Residues 26–44 show a composition bias toward pro residues; the sequence is LPLPQQQPPQQEPPPPPVP. A disulfide bond links C51 and C92. G132 is a binding site for 4-[(2-hydroxyethoxy)carbonyl]benzoate. 4 cysteine pairs are disulfide-bonded: C224-C529, C303-C320, C340-C348, and C577-C599. Catalysis depends on S225, which acts as the Acyl-ester intermediate. E226 provides a ligand contact to 4-[(2-hydroxyethoxy)carbonyl]benzoate. D304, D307, L309, D311, and I313 together coordinate Ca(2+). 4-[(2-hydroxyethoxy)carbonyl]benzoate is bound by residues R411 and S416. Catalysis depends on charge relay system residues D492 and H528. H528 provides a ligand contact to 4-[(2-hydroxyethoxy)carbonyl]benzoate.

The protein belongs to the tannase family.

The protein resides in the cell outer membrane. The catalysed reaction is 4-[(2-hydroxyethoxy)carbonyl]benzoate + H2O = terephthalate + ethylene glycol + H(+). In terms of biological role, involved in the degradation and assimilation of the plastic poly(ethylene terephthalate) (PET), which allows I.sakaiensis to use PET as its major energy and carbon source for growth. Likely acts synergistically with PETase to depolymerize PET. Catalyzes the hydrolysis of mono(2-hydroxyethyl) terephthalate (MHET) into its two environmentally benign monomers, terephthalate and ethylene glycol. Does not show activity against PET, bis(hydroxyethyl) terephthalate (BHET), pNP-aliphatic esters or typical aromatic ester compounds catalyzed by the tannase family enzymes, such as ethyl gallate and ethyl ferulate. The chain is Mono(2-hydroxyethyl) terephthalate hydrolase from Piscinibacter sakaiensis (Ideonella sakaiensis).